We begin with the raw amino-acid sequence, 193 residues long: Ion-translocating oxidoreductase complex subunit A (193 aa).

The next 6 membrane-spanning stretches (helical) occupy residues 5-25 (LMLL…FLGL), 39-59 (IGMG…TWLI), 62-82 (FLLV…LVIA), 102-122 (VLGI…VALL), 134-154 (VLYG…FAGL), and 170-190 (APIS…FAGL).

Belongs to the NqrDE/RnfAE family. As to quaternary structure, the complex is composed of six subunits: RnfA, RnfB, RnfC, RnfD, RnfE and RnfG.

Its subcellular location is the cell inner membrane. Functionally, part of a membrane-bound complex that couples electron transfer with translocation of ions across the membrane. The sequence is that of Ion-translocating oxidoreductase complex subunit A from Azoarcus sp. (strain BH72).